A 198-amino-acid chain; its full sequence is FMN-dependent NADH:quinone oxidoreductase 6 (198 aa).

96–99 serves as a coordination point for FMN; sequence MYNF.

The protein belongs to the azoreductase type 1 family. In terms of assembly, homodimer. The cofactor is FMN.

The catalysed reaction is 2 a quinone + NADH + H(+) = 2 a 1,4-benzosemiquinone + NAD(+). The enzyme catalyses N,N-dimethyl-1,4-phenylenediamine + anthranilate + 2 NAD(+) = 2-(4-dimethylaminophenyl)diazenylbenzoate + 2 NADH + 2 H(+). Its function is as follows. Quinone reductase that provides resistance to thiol-specific stress caused by electrophilic quinones. Functionally, also exhibits azoreductase activity. Catalyzes the reductive cleavage of the azo bond in aromatic azo compounds to the corresponding amines. The protein is FMN-dependent NADH:quinone oxidoreductase 6 of Burkholderia lata (strain ATCC 17760 / DSM 23089 / LMG 22485 / NCIMB 9086 / R18194 / 383).